Reading from the N-terminus, the 384-residue chain is Lipid-A-disaccharide synthase (384 aa).

The protein belongs to the LpxB family.

It carries out the reaction a lipid X + a UDP-2-N,3-O-bis[(3R)-3-hydroxyacyl]-alpha-D-glucosamine = a lipid A disaccharide + UDP + H(+). It functions in the pathway bacterial outer membrane biogenesis; LPS lipid A biosynthesis. Condensation of UDP-2,3-diacylglucosamine and 2,3-diacylglucosamine-1-phosphate to form lipid A disaccharide, a precursor of lipid A, a phosphorylated glycolipid that anchors the lipopolysaccharide to the outer membrane of the cell. The protein is Lipid-A-disaccharide synthase of Neisseria meningitidis serogroup C / serotype 2a (strain ATCC 700532 / DSM 15464 / FAM18).